The chain runs to 607 residues: Transporter aclS (607 aa).

The next 12 membrane-spanning stretches (helical) occupy residues 67-87 (LGGS…AVVL), 91-111 (IAAI…IGFP), 152-172 (LTVV…TAIL), 192-212 (VTTQ…PVLY), 221-241 (LMIG…IWSL), 262-282 (SLGF…SIAL), 317-337 (VFGQ…FGCL), 364-384 (AAAV…NVVD), 423-443 (GCYV…LASA), 445-465 (TFVS…GIHI), 500-520 (GVLP…HSIN), and 531-551 (HLYA…HTLV). The segment at 583-607 (NKDSTEEDSDRSLRRESREVVETKV) is disordered. Residues 592 to 607 (DRSLRRESREVVETKV) show a composition bias toward basic and acidic residues.

It belongs to the purine-cytosine permease (2.A.39) family.

It is found in the membrane. In terms of biological role, transporter; part of the gene cluster that mediates the biosynthesis of aspirochlorine (or antibiotic A30641), an unusual halogenated spiro compound with distinctive antifungal properties due to selective inhibition of protein biosynthesis, and which is also active against bacteria, viruses, and murine tumor cells. The protein is Transporter aclS of Aspergillus oryzae (strain ATCC 42149 / RIB 40) (Yellow koji mold).